The primary structure comprises 329 residues: 4-hydroxythreonine-4-phosphate dehydrogenase (329 aa).

Residues His136 and Thr137 each contribute to the substrate site. A divalent metal cation-binding residues include His166, His211, and His266. Residues Lys274, Asn283, and Arg292 each coordinate substrate.

Belongs to the PdxA family. Homodimer. Requires Zn(2+) as cofactor. Mg(2+) is required as a cofactor. Co(2+) serves as cofactor.

It is found in the cytoplasm. It carries out the reaction 4-(phosphooxy)-L-threonine + NAD(+) = 3-amino-2-oxopropyl phosphate + CO2 + NADH. It functions in the pathway cofactor biosynthesis; pyridoxine 5'-phosphate biosynthesis; pyridoxine 5'-phosphate from D-erythrose 4-phosphate: step 4/5. Catalyzes the NAD(P)-dependent oxidation of 4-(phosphooxy)-L-threonine (HTP) into 2-amino-3-oxo-4-(phosphooxy)butyric acid which spontaneously decarboxylates to form 3-amino-2-oxopropyl phosphate (AHAP). This is 4-hydroxythreonine-4-phosphate dehydrogenase from Neisseria meningitidis serogroup A / serotype 4A (strain DSM 15465 / Z2491).